The chain runs to 380 residues: Probable protein phosphatase 2C 2 (380 aa).

Positions arginine 69–phenylalanine 339 constitute a PPM-type phosphatase domain. Residues aspartate 113, glycine 114, aspartate 287, and aspartate 330 each contribute to the Mn(2+) site.

Belongs to the PP2C family. Mg(2+) serves as cofactor. It depends on Mn(2+) as a cofactor.

The catalysed reaction is O-phospho-L-seryl-[protein] + H2O = L-seryl-[protein] + phosphate. It carries out the reaction O-phospho-L-threonyl-[protein] + H2O = L-threonyl-[protein] + phosphate. This Oryza sativa subsp. japonica (Rice) protein is Probable protein phosphatase 2C 2.